The sequence spans 459 residues: Putrescine aminotransferase (459 aa).

Pyridoxal 5'-phosphate is bound by residues 150–151 (GT) and Gln-274. Position 300 is an N6-(pyridoxal phosphate)lysine (Lys-300). Thr-332 serves as a coordination point for pyridoxal 5'-phosphate.

It belongs to the class-III pyridoxal-phosphate-dependent aminotransferase family. Putrescine aminotransferase subfamily. Pyridoxal 5'-phosphate serves as cofactor.

The enzyme catalyses an alkane-alpha,omega-diamine + 2-oxoglutarate = an omega-aminoaldehyde + L-glutamate. The catalysed reaction is putrescine + 2-oxoglutarate = 1-pyrroline + L-glutamate + H2O. It catalyses the reaction cadaverine + 2-oxoglutarate = 5-aminopentanal + L-glutamate. Its pathway is amine and polyamine degradation; putrescine degradation; 4-aminobutanal from putrescine (transaminase route): step 1/1. Its function is as follows. Catalyzes the aminotransferase reaction from putrescine to 2-oxoglutarate, leading to glutamate and 4-aminobutanal, which spontaneously cyclizes to form 1-pyrroline. This is the first step in one of two pathways for putrescine degradation, where putrescine is converted into 4-aminobutanoate (gamma-aminobutyrate or GABA) via 4-aminobutanal. Also functions as a cadaverine transaminase in a a L-lysine degradation pathway to succinate that proceeds via cadaverine, glutarate and L-2-hydroxyglutarate. This is Putrescine aminotransferase from Salmonella heidelberg (strain SL476).